The following is a 458-amino-acid chain: Transmembrane protein 135 (458 aa).

6 consecutive transmembrane segments (helical) span residues 68-88 (ILQSASFLTANGALYITFFCI), 96-116 (FYSWTPGFGAALPASYVAILI), 149-169 (TLRNGEVLLFCITAAMYMFFF), 298-318 (FQLGAFLGSFVSIYKGTSCFL), 331-351 (IVAGFLAGVSMMFYKSTTISM), and 377-397 (ADTIIYSISTAICFHAAVMEV).

The protein belongs to the TMEM135 family.

It localises to the mitochondrion membrane. It is found in the peroxisome membrane. In terms of biological role, involved in mitochondrial metabolism by regulating the balance between mitochondrial fusion and fission. May act as a regulator of mitochondrial fission that promotes DNM1L-dependent fission through activation of DNM1L. May be involved in peroxisome organization. The protein is Transmembrane protein 135 of Mus musculus (Mouse).